The sequence spans 221 residues: Guanylate kinase (221 aa).

Residues 18 to 196 (GFLFILSSPS…SASLIKSIYL (179 aa)) form the Guanylate kinase-like domain. 25-32 (SPSGAGKS) provides a ligand contact to ATP.

Belongs to the guanylate kinase family.

The protein localises to the cytoplasm. The enzyme catalyses GMP + ATP = GDP + ADP. Essential for recycling GMP and indirectly, cGMP. This chain is Guanylate kinase, found in Bartonella quintana (strain Toulouse) (Rochalimaea quintana).